Consider the following 157-residue polypeptide: Probable succinate transporter subunit YjjB (157 aa).

The next 4 helical transmembrane spans lie at 8–28 (LALA…AMVF), 50–70 (MILM…SMLG), 87–107 (VFTV…TAMI), and 129–149 (FLTA…PGLW).

Belongs to the ThrE exporter (TC 2.A.79) family. The transporter is composed of YjjB and YjjP.

It localises to the cell inner membrane. Its function is as follows. Involved in succinate export with YjjP. Both proteins are required for export. In Escherichia coli O157:H7 (strain EC4115 / EHEC), this protein is Probable succinate transporter subunit YjjB.